A 72-amino-acid chain; its full sequence is Seed trypsin/chymotrypsin inhibitor IVB (72 aa).

7 disulfides stabilise this stretch: Cys8-Cys61, Cys9-Cys24, Cys12-Cys57, Cys14-Cys22, Cys31-Cys38, Cys35-Cys50, and Cys40-Cys48.

It belongs to the Bowman-Birk serine protease inhibitor family. In terms of tissue distribution, seed.

Its function is as follows. Inhibitor of trypsin and of chymotrypsin. May function as a natural phytochemical defense against predators. In Pisum sativum (Garden pea), this protein is Seed trypsin/chymotrypsin inhibitor IVB.